The chain runs to 830 residues: Septin and tuftelin-interacting protein 1 homolog (830 aa).

Residues 1-17 (MEDDDGRESFEINDMDL) show a composition bias toward acidic residues. Disordered stretches follow at residues 1–122 (MEDD…PKQN) and 196–244 (AYGK…KGSW). The 47-residue stretch at 153 to 199 (NSNKIMKMMQAMGYKPGEGLGAQGQGIVEPVQAQLRKGRGAVGAYGK) folds into the G-patch domain.

This sequence belongs to the TFP11/STIP family. Identified in the spliceosome C complex. Can assemble into large rod-like polymers. In terms of tissue distribution, detected in muscle cells from body, pharynx and vulva, in neurons from head and tail, in pharyngeal gland and in tail hypodermal cells.

Its subcellular location is the nucleus. May be involved in pre-mRNA splicing. Required for embryonic development and survival. The sequence is that of Septin and tuftelin-interacting protein 1 homolog (stip-1) from Caenorhabditis elegans.